Reading from the N-terminus, the 173-residue chain is Protein GrpE (173 aa).

This sequence belongs to the GrpE family. In terms of assembly, homodimer.

The protein localises to the cytoplasm. Functionally, participates actively in the response to hyperosmotic and heat shock by preventing the aggregation of stress-denatured proteins, in association with DnaK and GrpE. It is the nucleotide exchange factor for DnaK and may function as a thermosensor. Unfolded proteins bind initially to DnaJ; upon interaction with the DnaJ-bound protein, DnaK hydrolyzes its bound ATP, resulting in the formation of a stable complex. GrpE releases ADP from DnaK; ATP binding to DnaK triggers the release of the substrate protein, thus completing the reaction cycle. Several rounds of ATP-dependent interactions between DnaJ, DnaK and GrpE are required for fully efficient folding. The chain is Protein GrpE from Campylobacter fetus subsp. fetus (strain 82-40).